Here is a 1085-residue protein sequence, read N- to C-terminus: Extracellular calcium-sensing receptor (1085 aa).

Residues 1–19 (MALYSCCWILLAFSTWCTS) form the signal peptide. The Extracellular portion of the chain corresponds to 20–611 (AYGPDQRAQK…KEIEFLSWTE (592 aa)). The tract at residues 23 to 189 (PDQRAQKKGD…QFKSFLRTIP (167 aa)) is ligand-binding 1 (LB1). Cys-61 and Cys-102 form a disulfide bridge. 67–71 (RGFRW) is a phosphate binding site. Ca(2+)-binding residues include Ile-82, Ser-85, Leu-88, and Leu-89. N-linked (GlcNAc...) asparagine glycosylation is present at Asn-91. Residue Thr-101 participates in Ca(2+) binding. The N-linked (GlcNAc...) asparagine glycan is linked to Asn-131. Ca(2+) is bound at residue Thr-146. Residues Ser-148, Ala-169, and Ser-171 each contribute to the L-tryptophan site. Residues Ser-171, Pro-189, Asp-191, Glu-232, and Asp-235 each coordinate Ca(2+). Positions 190–325 (NDEHQATAMA…GGTIGFGLKA (136 aa)) are ligand-binding 2 (LB2). 7 disulfides stabilise this stretch: Cys-237–Cys-562, Cys-359–Cys-396, Cys-438–Cys-450, Cys-543–Cys-563, Cys-547–Cys-566, Cys-569–Cys-583, and Cys-586–Cys-599. 2 residues coordinate spermine: Asp-239 and Ser-241. Asn-262 and Asn-288 each carry an N-linked (GlcNAc...) asparagine glycan. Glu-298 lines the Ca(2+) pocket. Glu-298 contacts L-tryptophan. Asn-401 is a glycosylation site (N-linked (GlcNAc...) asparagine). 416–418 (RIS) is a binding site for phosphate. Residues Asn-447, Asn-469, and Asn-489 are each glycosylated (N-linked (GlcNAc...) asparagine). Tyr-490 serves as a coordination point for Ca(2+). Asn-542 is a glycosylation site (N-linked (GlcNAc...) asparagine). Positions 543-613 (CSRDCLAGTR…IEFLSWTEPF (71 aa)) are cysteine-rich (CR). Gly-558 contributes to the Ca(2+) binding site. An N-linked (GlcNAc...) asparagine glycan is attached at Asn-595. A helical transmembrane segment spans residues 612-637 (PFGIALTLFAVLGIFLTAFVLGVFIK). Topologically, residues 638–649 (FRNTPIVKATNR) are cytoplasmic. The interval 638 to 649 (FRNTPIVKATNR) is intracellular loop 1 (ICL1). A helical membrane pass occupies residues 650-669 (ELSYLLLFSLLCCFSSSLFF). The Extracellular portion of the chain corresponds to 670 to 675 (IGEPQD). A helical membrane pass occupies residues 676–699 (WTCRLRQPAFGISFVLCISCILVK). At 700 to 723 (TNRVLLVFEAKIPTSFHRKWWGLN) the chain is on the cytoplasmic side. The tract at residues 700-723 (TNRVLLVFEAKIPTSFHRKWWGLN) is intracellular loop 2 (ICL2). Residues 724 to 746 (LQFLLVFLCTFMQIVICAIWLNT) traverse the membrane as a helical segment. Over 747 to 770 (APPSSYRNHELEDEIIFITCHEGS) the chain is Extracellular. The helical transmembrane segment at 771–790 (LMALGFLIGYTCLLAAICFF) threads the bilayer. The Cytoplasmic segment spans residues 791-806 (FAFKSRKLPENFNEAK). Positions 791–806 (FAFKSRKLPENFNEAK) are intracellular loop 3 (ICL3). The chain crosses the membrane as a helical span at residues 807-829 (FITFSMLIFFIVWISFIPAYAST). Residues 830–833 (YGKF) are Extracellular-facing. A helical transmembrane segment spans residues 834-855 (VSAVEVIAILAASFGLLACIFF). At 856–1085 (NKVYIILFKP…STVTENMLRS (230 aa)) the chain is on the cytoplasmic side. A C-terminus region spans residues 856-1085 (NKVYIILFKP…STVTENMLRS (230 aa)). The interval 881–901 (AFKVAARATLRRSNVSRQRSS) is interaction with RNF19A. Thr-889 is subject to Phosphothreonine. An arginine-rich retention motif region spans residues 891-899 (RRSNVSRQR). Ser-893, Ser-900, and Ser-921 each carry phosphoserine. Residues 893 to 938 (SNVSRQRSSSLGGSTGSTPSSSISSKSNSEDPFPQQQPKRQKQPQP) are compositionally biased toward low complexity. Disordered regions lie at residues 893–969 (SNVS…PPRC) and 1034–1058 (SQET…EEMS). The span at 950–960 (QPRPPSTPQPQ) shows a compositional bias: pro residues. Ser-1068 is modified (phosphoserine).

It belongs to the G-protein coupled receptor 3 family. In terms of assembly, homodimer; disulfide-linked. Interacts with VCP. Interacts with ARRB1. Post-translationally, phosphorylation at Thr-889 by PKC impairs coupling with G(q)/G(11) G-proteins, while it does not affect G(i)/G(o)-coupling. Phosphorylation at Ser-893 by PKC and Ser-900 by PKA promote plasma membrane localization. Ubiquitinated by RNF19A; which induces proteasomal degradation.

The protein localises to the cell membrane. With respect to regulation, in resting state, adopts an open conformation, anion-binding promoting the inactive configuration. Upon aromatic amino acid-binding, the groove in the extracellular venus flytrap module is closed, thereby inducing the formation of a novel homodimer interface between subunits. Calcium ions stabilize the active state by enhancing homodimer interactions between membrane-proximal domains to fully activate the receptor. Upon activation, the homodimer adopts an asymmetric configuration of the 7-transmembrane region that primes one protomer for G-protein coupling. G-protein binding expands the transmembrane dimer interface; the restriction imposed by the receptor dimer, in combination with intracellular loop 2 (ICL2), enables G-protein activation by facilitating conformational transition of G-protein alpha. Coupling to different classes of G-proteins results in distinct CASR-G-protein interfaces. In terms of biological role, G-protein-coupled receptor that senses changes in the extracellular concentration of calcium ions and plays a key role in maintaining calcium homeostasis. Senses fluctuations in the circulating calcium concentration: activated by elevated circulating calcium, leading to decreased parathyroid hormone (PTH) secretion in parathyroid glands. In kidneys, acts as a key regulator of renal tubular calcium resorption. Ligand binding causes a conformation change that triggers signaling via guanine nucleotide-binding proteins (G-proteins) and modulates the activity of downstream effectors. CASR is coupled with different G(q)/G(11), G(i)/G(o)- or G(s)-classes of G-proteins depending on the context. In the parathyroid and kidney, CASR signals through G(q)/G(11) and G(i)/G(o) G-proteins: G(q)/G(11) coupling activates phospholipase C-beta, releasing diacylglycerol (DAG) and inositol 1,4,5-trisphosphate (IP3) second messengers, while G(i)/G(o) coupling mediates inhibition of adenylate cyclase activity. The G-protein-coupled receptor activity is activated by a co-agonist mechanism: aromatic amino acids, such as Trp or Phe, act concertedly with divalent cations, such as calcium or magnesium, to achieve full receptor activation. Acts as an activator of the NLRP3 inflammasome via G(i)/G(o)-mediated signaling: down-regulation of cyclic AMP (cAMP) relieving NLRP3 inhibition by cAMP. Acts as a regulator of proton-sensing receptor GPR68 in a seesaw manner: CASR-mediated signaling inhibits GPR68 signaling in response to extracellular calcium, while GPR68 inhibits CASR in presence of extracellular protons. The chain is Extracellular calcium-sensing receptor (CASR) from Bos taurus (Bovine).